A 421-amino-acid chain; its full sequence is MFMGLDGFEWWTGVVEDRTTDPLKLGRIKVRMIGLHPDKKSSEQGIRTEELLWVHPMQSLDNAAMNGIGNAPIGVVEGTWVFGFFRDKLRQDAVAMGVLPGIPEDLPNGSVGFNDPNEKYPLADKLNEPDTNRLARNDVDPDVYDESQSQTAFDNGEAPYVYRPHPIIASKRAAEEKEIPLAGYNAEGPKYDEKGTPYAAQYPYNHVRESESGHIHEIDDTEGAERLHTYHRTGTFEEIHPDGSRVTKIIGDDFEIVHKNQNVYIKGNLNITVVGDATFYCQQNVTQQIDGDLKQHVKGNVDQHVEMNVTQTVDKDVTQVVHQNVTQTVDMNVTQTVHQNVTQTVDGDVNQTVGGNVQSNVTGDYTQNISGNYTITVGGSMSESVSSSYTRSAASISDDGGGATLNLAGSAALDGTTVSLG.

As to quaternary structure, homotrimer. Interacts with gp27 trimer.

The protein resides in the virion. Its function is as follows. Tail-associated protein of the baseplate hub that is essential for viral DNA ejection. Involved in the tail assembly. The polypeptide is Protein Gp5 (Vibrio parahaemolyticus (KVP40)).